A 254-amino-acid polypeptide reads, in one-letter code: Imidazole glycerol phosphate synthase subunit HisF (254 aa).

Catalysis depends on residues Asp-13 and Asp-132.

It belongs to the HisA/HisF family. In terms of assembly, heterodimer of HisH and HisF.

It localises to the cytoplasm. The catalysed reaction is 5-[(5-phospho-1-deoxy-D-ribulos-1-ylimino)methylamino]-1-(5-phospho-beta-D-ribosyl)imidazole-4-carboxamide + L-glutamine = D-erythro-1-(imidazol-4-yl)glycerol 3-phosphate + 5-amino-1-(5-phospho-beta-D-ribosyl)imidazole-4-carboxamide + L-glutamate + H(+). Its pathway is amino-acid biosynthesis; L-histidine biosynthesis; L-histidine from 5-phospho-alpha-D-ribose 1-diphosphate: step 5/9. IGPS catalyzes the conversion of PRFAR and glutamine to IGP, AICAR and glutamate. The HisF subunit catalyzes the cyclization activity that produces IGP and AICAR from PRFAR using the ammonia provided by the HisH subunit. In Nautilia profundicola (strain ATCC BAA-1463 / DSM 18972 / AmH), this protein is Imidazole glycerol phosphate synthase subunit HisF.